A 297-amino-acid chain; its full sequence is Ribosomal RNA small subunit methyltransferase H (297 aa).

S-adenosyl-L-methionine contacts are provided by residues 34–36, aspartate 54, phenylalanine 88, aspartate 106, and glutamine 113; that span reads AGH. Residues 272 to 297 form a disordered region; that stretch reads PLTAGEEETDRNPRARSAKLRAAEKK.

Belongs to the methyltransferase superfamily. RsmH family.

The protein resides in the cytoplasm. It carries out the reaction cytidine(1402) in 16S rRNA + S-adenosyl-L-methionine = N(4)-methylcytidine(1402) in 16S rRNA + S-adenosyl-L-homocysteine + H(+). Specifically methylates the N4 position of cytidine in position 1402 (C1402) of 16S rRNA. The protein is Ribosomal RNA small subunit methyltransferase H of Acidobacterium capsulatum (strain ATCC 51196 / DSM 11244 / BCRC 80197 / JCM 7670 / NBRC 15755 / NCIMB 13165 / 161).